The following is a 576-amino-acid chain: uncharacterized protein (576 aa).

2 stretches are compositionally biased toward polar residues: residues 1 to 21 and 28 to 40; these read MSTNPNAGIQPLTNSISQSAS and HTTSHESVSTYQL. The interval 1-40 is disordered; sequence MSTNPNAGIQPLTNSISQSASAHPELYHTTSHESVSTYQL. A run of 12 helical transmembrane segments spans residues 149-169, 173-193, 200-220, 231-251, 261-281, 291-311, 366-386, 401-421, 446-466, 472-492, 503-525, and 542-562; these read FASSVFSVPAEAITTIFHISL, LLTMTVFLCGYIAGPIVWAPL, KLPLLIGMFGFGIFNISVAVA, FFSGFFASAPLTVVAAAFADM, ITIFAALVFDGPLVSPIIGGF, WTEYITSFMGFFALVIVYLFC, PIVFLITLYSSFVYAILYLLL, MGVAELPYIGLLVGVFIGSAI, LPPMMIGCFMFPAGIFWLSWS, VHWIVPTLSGLATGCGILLIF, YLFRAASAVAANTIMRSAMAAGF, and GSLLGFIAVALIPMPFAFFFF.

Belongs to the major facilitator superfamily. CAR1 family.

The protein resides in the endoplasmic reticulum. It is found in the golgi apparatus. Its subcellular location is the membrane. This is an uncharacterized protein from Schizosaccharomyces pombe (strain 972 / ATCC 24843) (Fission yeast).